We begin with the raw amino-acid sequence, 134 residues long: Small ribosomal subunit protein uS11 (134 aa).

Residues 114–134 form a disordered region; that stretch reads SISDVTPQPHNGCRPPKRRRV.

This sequence belongs to the universal ribosomal protein uS11 family. Part of the 30S ribosomal subunit. Interacts with proteins S7 and S18. Binds to IF-3.

Located on the platform of the 30S subunit, it bridges several disparate RNA helices of the 16S rRNA. Forms part of the Shine-Dalgarno cleft in the 70S ribosome. The protein is Small ribosomal subunit protein uS11 of Corynebacterium efficiens (strain DSM 44549 / YS-314 / AJ 12310 / JCM 11189 / NBRC 100395).